Reading from the N-terminus, the 642-residue chain is Mini-chromosome maintenance complex-binding protein (642 aa).

Positions 151 to 161 (ARVSPSTSYTP) are enriched in polar residues. Residues 151–200 (ARVSPSTSYTPSRHKRSYEDDEDMDLQPNKQKDQHSGARQAGGLGGLHWR) are disordered. At serine 154 the chain carries Phosphoserine. Threonine 160 is modified (phosphothreonine). Serine 167 and serine 298 each carry phosphoserine.

It belongs to the MCMBP family. Interacts with the MCM complex: associates with the MCM3-7 complex which lacks MCM2, while it does not interact with the MCM complex when MCM2 is present (MCM2-7 complex). Interacts with the RPA complex, when composed of all RPA1, RPA2 and RPA3 components, but not with RPA1 or RPA2 alone.

The protein resides in the nucleus. Its function is as follows. Associated component of the MCM complex that acts as a regulator of DNA replication. Binds to the MCM complex during late S phase and promotes the disassembly of the MCM complex from chromatin, thereby acting as a key regulator of pre-replication complex (pre-RC) unloading from replicated DNA. Can dissociate the MCM complex without addition of ATP; probably acts by destabilizing interactions of each individual subunits of the MCM complex. Required for sister chromatid cohesion. The polypeptide is Mini-chromosome maintenance complex-binding protein (Mcmbp) (Rattus norvegicus (Rat)).